A 275-amino-acid chain; its full sequence is Elongation factor Ts (275 aa).

Positions 76–79 (TDFV) are involved in Mg(2+) ion dislocation from EF-Tu.

It belongs to the EF-Ts family.

It localises to the cytoplasm. Functionally, associates with the EF-Tu.GDP complex and induces the exchange of GDP to GTP. It remains bound to the aminoacyl-tRNA.EF-Tu.GTP complex up to the GTP hydrolysis stage on the ribosome. In Rhodococcus jostii (strain RHA1), this protein is Elongation factor Ts.